Consider the following 182-residue polypeptide: Triplatin (182 aa).

Positions 1-18 (MKMIIAVTFLGIVTIAFA) are cleaved as a signal peptide. Cystine bridges form between C21-C133, C55-C177, and C88-C105.

It belongs to the calycin superfamily. Triabin family. In terms of tissue distribution, expressed in salivary glands.

It localises to the secreted. In terms of biological role, inhibits platelet aggregation and vasoconstriction through binding to distinct eicosanoids involved in inflammation (acts as a scavenger), and has a role in inhibiting host innate immunity by impairing platelet-assisted formation of neutrophil extracellular traps (NETs). Inhibits platelet aggregation by collagen, and low doses of thromboxane A2 mimetic (TXA2 mimetic), and arachidonic acid (AA) without affecting aggregation induced by ADP, convulxin (GP6 agonist), and PMA. Binds to TXA2, TXB2, prostaglandine H2 mimetic (PGH2 mimetic), PGJ2, and PGF2alpha. Binding is not observed to leukotrienes, AA, and biogenic amines (PGE1, 5(S)-HETE, 12(S)-HETE, 20-HETE, norepinephrine, epinephrine, serotonin, LTC4 and ADP). Induces relaxation of aorta rat previously contracted with TXA2 mimetic. Moreover, it also impairs platelet-assisted formation of neutrophil extracellular traps (NETs). NETs are web-like structures of DNA and proteins that play an important role in killing of pathogens. In addition, NETs are implicated in thrombus formation. In vivo, this protein exhibits antithrombotic activity in two distinct mice models that are highly dependent on platelets. It is noteworthy that it inhibits thrombosis without promoting excessive bleeding. This Triatoma infestans (Assassin bug) protein is Triplatin.